The sequence spans 214 residues: Osteoclast-stimulating factor 1 (214 aa).

In terms of domain architecture, SH3 spans 12–71; it reads GQVKVYRALFTFDPRTPDELYFEEGDILYISDTSDSNWWKGTCRGRTGLIPSNYVAEQAE. ANK repeat units follow at residues 72 to 101, 105 to 135, and 139 to 168; these read SIDN…GING, AGNT…ELNQ, and LGDT…RTDV.

It is found in the cytoplasm. Functionally, induces bone resorption, acting probably through a signaling cascade which results in the secretion of factor(s) enhancing osteoclast formation and activity. This Danio rerio (Zebrafish) protein is Osteoclast-stimulating factor 1 (ostf1).